Reading from the N-terminus, the 61-residue chain is Photosystem II reaction center protein K (61 aa).

Positions 1–24 (MLNIFNLICICFNSALFSSSFLFA) are excised as a propeptide. The helical transmembrane segment at 36 to 56 (IVDFMPVIPVLFFLLAFVWQA) threads the bilayer.

Belongs to the PsbK family. As to quaternary structure, PSII is composed of 1 copy each of membrane proteins PsbA, PsbB, PsbC, PsbD, PsbE, PsbF, PsbH, PsbI, PsbJ, PsbK, PsbL, PsbM, PsbT, PsbX, PsbY, PsbZ, Psb30/Ycf12, at least 3 peripheral proteins of the oxygen-evolving complex and a large number of cofactors. It forms dimeric complexes.

It is found in the plastid. It localises to the chloroplast thylakoid membrane. Its function is as follows. One of the components of the core complex of photosystem II (PSII). PSII is a light-driven water:plastoquinone oxidoreductase that uses light energy to abstract electrons from H(2)O, generating O(2) and a proton gradient subsequently used for ATP formation. It consists of a core antenna complex that captures photons, and an electron transfer chain that converts photonic excitation into a charge separation. This Gossypium barbadense (Sea Island cotton) protein is Photosystem II reaction center protein K.